The sequence spans 439 residues: Xaa-Pro dipeptidase (439 aa).

Mn(2+) contacts are provided by Asp244, Asp255, His335, Glu380, and Glu419.

The protein belongs to the peptidase M24B family. Bacterial-type prolidase subfamily. Requires Mn(2+) as cofactor.

The enzyme catalyses Xaa-L-Pro dipeptide + H2O = an L-alpha-amino acid + L-proline. Splits dipeptides with a prolyl residue in the C-terminal position. The chain is Xaa-Pro dipeptidase from Shewanella sp. (strain MR-4).